Here is a 117-residue protein sequence, read N- to C-terminus: UPF0102 protein Clos_1471 (117 aa).

This sequence belongs to the UPF0102 family.

The chain is UPF0102 protein Clos_1471 from Alkaliphilus oremlandii (strain OhILAs) (Clostridium oremlandii (strain OhILAs)).